The sequence spans 103 residues: Putative double-stranded DNA mimic protein APJL_1366 (103 aa).

This sequence belongs to the putative dsDNA mimic protein family.

Its function is as follows. May act as a double-stranded DNA (dsDNA) mimic. Probably regulates the activity of a dsDNA-binding protein. This is Putative double-stranded DNA mimic protein APJL_1366 from Actinobacillus pleuropneumoniae serotype 3 (strain JL03).